Consider the following 207-residue polypeptide: Segregation and condensation protein B (207 aa).

The segment at 173 to 207 (DDTAESDNDSADLYYRQFEQTLNETGPETAPKGEQ) is disordered.

Belongs to the ScpB family. As to quaternary structure, homodimer. Homodimerization may be required to stabilize the binding of ScpA to the Smc head domains. Component of a cohesin-like complex composed of ScpA, ScpB and the Smc homodimer, in which ScpA and ScpB bind to the head domain of Smc. The presence of the three proteins is required for the association of the complex with DNA.

The protein resides in the cytoplasm. Its function is as follows. Participates in chromosomal partition during cell division. May act via the formation of a condensin-like complex containing Smc and ScpA that pull DNA away from mid-cell into both cell halves. The polypeptide is Segregation and condensation protein B (Latilactobacillus sakei subsp. sakei (strain 23K) (Lactobacillus sakei subsp. sakei)).